The following is a 258-amino-acid chain: 4-oxalmesaconate hydratase (258 aa).

Zn(2+) is bound by residues H28, D31, and H141.

Belongs to the MshB deacetylase family. Zn(2+) is required as a cofactor.

The catalysed reaction is 2-hydroxy-4-oxobutane-1,2,4-tricarboxylate = 4-carboxy-2-hydroxy-cis,cis-muconate + H2O. In terms of biological role, catalyzes the conversion of oxalomesaconic acid enol (OMAenol) to 4-carboxy-4-hydroxy-2-oxoadipic acid (CHA). Mediates the third step of gallate degradation pathway. In Pseudomonas putida (strain ATCC 47054 / DSM 6125 / CFBP 8728 / NCIMB 11950 / KT2440), this protein is 4-oxalmesaconate hydratase (galB).